The chain runs to 229 residues: Uracil-DNA glycosylase (229 aa).

Catalysis depends on D64, which acts as the Proton acceptor.

The protein belongs to the uracil-DNA glycosylase (UDG) superfamily. UNG family.

The protein resides in the cytoplasm. It catalyses the reaction Hydrolyzes single-stranded DNA or mismatched double-stranded DNA and polynucleotides, releasing free uracil.. Its function is as follows. Excises uracil residues from the DNA which can arise as a result of misincorporation of dUMP residues by DNA polymerase or due to deamination of cytosine. The chain is Uracil-DNA glycosylase from Klebsiella pneumoniae (strain 342).